The following is a 237-amino-acid chain: 4'-phosphopantetheinyl transferase HetI (237 aa).

Asp-128, Glu-130, and Glu-174 together coordinate Mg(2+).

The protein belongs to the P-Pant transferase superfamily. Gsp/Sfp/HetI/AcpT family. It depends on Mg(2+) as a cofactor.

The enzyme catalyses apo-[peptidyl-carrier protein] + CoA = holo-[peptidyl-carrier protein] + adenosine 3',5'-bisphosphate + H(+). Functionally, probably activates the acyl carrier protein (ACP) domain of HetM, by transferring the 4'-phosphopantetheinyl moiety of coenzyme A (CoA) to a serine residue. May be required for maintaining vegetative growth and probably acts via HetN to inhibit differentiation. This Nostoc sp. (strain PCC 7120 / SAG 25.82 / UTEX 2576) protein is 4'-phosphopantetheinyl transferase HetI (hetI).